The sequence spans 571 residues: PR domain zinc finger protein 14 (571 aa).

S79 is subject to Phosphoserine. Residues 129-191 form a disordered region; sequence LGHQIIGGDN…PKPSNQEGKS (63 aa). The span at 165 to 176 shows a compositional bias: polar residues; that stretch reads RTSQLLPCSPSK. The tract at residues 194-384 is interaction with CBFA2T2; sequence RFQFTEEDLH…DIPVSLQVTE (191 aa). Positions 251–367 constitute an SET domain; the sequence is EGLCLMQTVF…QNQELLVWYG (117 aa). A C2H2-type 1; atypical zinc finger spans residues 400 to 424; sequence YRCERCGKVFTYKYYRDKHLKYTPC. C2H2-type zinc fingers lie at residues 432-455, 461-483, 489-511, 517-540, and 546-568; these read FPCS…LHVH, HKCS…MRVH, YQCV…IRQH, FKCK…RRSH, and CSCS…MKFH.

This sequence belongs to the class V-like SAM-binding methyltransferase superfamily. In terms of assembly, interacts with CBFA2T2. In terms of tissue distribution, expressed in embryonic stem cells. Tends to be overexpressed in breast cancer (at protein level).

It is found in the nucleus. Its function is as follows. Transcription factor that has both positive and negative roles on transcription. Required for the maintenance of embryonic stem cell identity and the reacquisition of pluripotency in somatic cells. May play an essential role in germ cell development at 2 levels: the reacquisition of potential pluripotency, including SOX2 up-regulation, and successful epigenetic reprogramming, characterized by EHMT1 repression. Its association with CBFA2T2 is required for the functions in pluripotency and germ cell formation. Directly up-regulates the expression of pluripotency gene POU5F1 through its proximal enhancer. Binds to the DNA consensus sequence 5'-GGTC[TC]CTAA-3'. This is PR domain zinc finger protein 14 (PRDM14) from Homo sapiens (Human).